Here is a 191-residue protein sequence, read N- to C-terminus: Methylated-DNA--protein-cysteine methyltransferase (191 aa).

DNA-binding residues include Y120 and R134. C151 acts as the Nucleophile; methyl group acceptor in catalysis.

Belongs to the MGMT family.

The protein localises to the nucleus. The enzyme catalyses a 6-O-methyl-2'-deoxyguanosine in DNA + L-cysteinyl-[protein] = S-methyl-L-cysteinyl-[protein] + a 2'-deoxyguanosine in DNA. The catalysed reaction is a 4-O-methyl-thymidine in DNA + L-cysteinyl-[protein] = a thymidine in DNA + S-methyl-L-cysteinyl-[protein]. In terms of biological role, involved in the cellular defense against the biological effects of O6-methylguanine (O6-MeG) and O4-methylthymine (O4-MeT) in DNA. Repairs the methylated nucleobase in DNA by stoichiometrically transferring the methyl group to a cysteine residue in the enzyme. This is a suicide reaction: the enzyme is irreversibly inactivated. The protein is Methylated-DNA--protein-cysteine methyltransferase (MGT1) of Debaryomyces hansenii (strain ATCC 36239 / CBS 767 / BCRC 21394 / JCM 1990 / NBRC 0083 / IGC 2968) (Yeast).